The chain runs to 1030 residues: Isoleucine--tRNA ligase 2 (1030 aa).

A 'HIGH' region motif is present at residues 48-58; sequence PFATGLPHYGH. Residues 589-593 carry the 'KMSKS' region motif; the sequence is KMSKR. Lysine 592 provides a ligand contact to ATP.

The protein belongs to the class-I aminoacyl-tRNA synthetase family. IleS type 2 subfamily. Monomer. Zn(2+) is required as a cofactor.

Its subcellular location is the cytoplasm. The catalysed reaction is tRNA(Ile) + L-isoleucine + ATP = L-isoleucyl-tRNA(Ile) + AMP + diphosphate. Its function is as follows. Catalyzes the attachment of isoleucine to tRNA(Ile). As IleRS can inadvertently accommodate and process structurally similar amino acids such as valine, to avoid such errors it has two additional distinct tRNA(Ile)-dependent editing activities. One activity is designated as 'pretransfer' editing and involves the hydrolysis of activated Val-AMP. The other activity is designated 'posttransfer' editing and involves deacylation of mischarged Val-tRNA(Ile). In terms of biological role, confers high-level resistance to the antibiotic mupirocin (pseudomonic acid A), an Ile-analog produced by P.fluorescens NCIMB 10586 itself that competitively inhibits activation by Ile-tRNA synthetase, thus inhibiting protein biosynthesis. In Pseudomonas fluorescens, this protein is Isoleucine--tRNA ligase 2 (ileS2).